The primary structure comprises 325 residues: L-lactate dehydrogenase 1 (325 aa).

NAD(+) contacts are provided by residues Val-17, Asp-38, Lys-43, Tyr-68, and 82–83; that span reads GA. Residues Gln-85, Arg-91, and 123–126 contribute to the substrate site; that span reads NPVD. NAD(+) is bound by residues 121-123 and Ser-146; that span reads AAN. A substrate-binding site is contributed by 151 to 154; it reads DTAR. Positions 156 and 171 each coordinate beta-D-fructose 1,6-bisphosphate. The active-site Proton acceptor is the His-178. Residue Tyr-223 is modified to Phosphotyrosine. Position 232 (Thr-232) interacts with substrate.

This sequence belongs to the LDH/MDH superfamily. LDH family. In terms of assembly, homotetramer.

The protein resides in the cytoplasm. It carries out the reaction (S)-lactate + NAD(+) = pyruvate + NADH + H(+). The protein operates within fermentation; pyruvate fermentation to lactate; (S)-lactate from pyruvate: step 1/1. Its activity is regulated as follows. Allosterically activated by fructose 1,6-bisphosphate (FBP). Its function is as follows. Catalyzes the conversion of lactate to pyruvate. The sequence is that of L-lactate dehydrogenase 1 from Lactococcus lactis subsp. cremoris (Streptococcus cremoris).